Consider the following 169-residue polypeptide: Large ribosomal subunit protein uL5 (169 aa).

Belongs to the universal ribosomal protein uL5 family. Part of the 50S ribosomal subunit; contacts the 5S rRNA and probably tRNA. Forms a bridge to the 30S subunit in the 70S ribosome.

This is one of the proteins that bind and probably mediate the attachment of the 5S RNA into the large ribosomal subunit, where it forms part of the central protuberance. In the 70S ribosome it contacts protein S13 of the 30S subunit (bridge B1b), connecting the 2 subunits; this bridge is implicated in subunit movement. May contact the P site tRNA; the 5S rRNA and some of its associated proteins might help stabilize positioning of ribosome-bound tRNAs. The chain is Large ribosomal subunit protein uL5 from Methanococcoides burtonii (strain DSM 6242 / NBRC 107633 / OCM 468 / ACE-M).